We begin with the raw amino-acid sequence, 259 residues long: Thiamine thiazole synthase (259 aa).

Residues Ala33, 52 to 53 (ER), Gly60, Val124, and 152 to 154 (HVD) each bind NAD(+). Positions 154 and 169 each coordinate Fe cation. Met219 lines the NAD(+) pocket. Arg229 is a glycine binding site.

This sequence belongs to the THI4 family. As to quaternary structure, homooctamer; tetramer of dimers. It depends on Fe(2+) as a cofactor.

It carries out the reaction hydrogen sulfide + glycine + NAD(+) = ADP-5-ethyl-4-methylthiazole-2-carboxylate + nicotinamide + 3 H2O + H(+). The protein operates within cofactor biosynthesis; thiamine diphosphate biosynthesis. Its function is as follows. Involved in the biosynthesis of the thiazole moiety of thiamine. Catalyzes the conversion of NAD and glycine to adenosine diphosphate 5-(2-hydroxyethyl)-4-methylthiazole-2-carboxylate (ADT), an adenylated thiazole intermediate, using free sulfide as a source of sulfur. In Pyrobaculum neutrophilum (strain DSM 2338 / JCM 9278 / NBRC 100436 / V24Sta) (Thermoproteus neutrophilus), this protein is Thiamine thiazole synthase.